The sequence spans 223 residues: 2-C-methyl-D-erythritol 4-phosphate cytidylyltransferase (223 aa).

Belongs to the IspD/TarI cytidylyltransferase family. IspD subfamily.

The enzyme catalyses 2-C-methyl-D-erythritol 4-phosphate + CTP + H(+) = 4-CDP-2-C-methyl-D-erythritol + diphosphate. Its pathway is isoprenoid biosynthesis; isopentenyl diphosphate biosynthesis via DXP pathway; isopentenyl diphosphate from 1-deoxy-D-xylulose 5-phosphate: step 2/6. Its function is as follows. Catalyzes the formation of 4-diphosphocytidyl-2-C-methyl-D-erythritol from CTP and 2-C-methyl-D-erythritol 4-phosphate (MEP). This Prochlorococcus marinus (strain MIT 9215) protein is 2-C-methyl-D-erythritol 4-phosphate cytidylyltransferase.